The sequence spans 286 residues: MMRVGAITLDGKATRDEIFVDLRERVARLAAAGRTPGLATVLVGDDPGSHAYVRGKHADCAKVGINSIRRDLPADISQAVLDETIDELNANPECTGYIVQLPLPKHLNENAALERIDPSKDADGLHPTNLGRLVLNEPAPLPCTPRGIVHLLRRFEVEIAGAHVAVLGRGVTVGRPLGLLLTRRSENATVTLCHTATRHLPEITREADIIVAAAGVPHMVTADMVRPGAAVVDVGVSRDDAGKLVGDVHPGVWDVAGHVSPNPGGVGPLTRAFLLTNVVERAEANL.

Residues 168-170 (GRG), Thr195, and Val236 contribute to the NADP(+) site.

It belongs to the tetrahydrofolate dehydrogenase/cyclohydrolase family. In terms of assembly, homodimer.

The enzyme catalyses (6R)-5,10-methylene-5,6,7,8-tetrahydrofolate + NADP(+) = (6R)-5,10-methenyltetrahydrofolate + NADPH. It carries out the reaction (6R)-5,10-methenyltetrahydrofolate + H2O = (6R)-10-formyltetrahydrofolate + H(+). It participates in one-carbon metabolism; tetrahydrofolate interconversion. In terms of biological role, catalyzes the oxidation of 5,10-methylenetetrahydrofolate to 5,10-methenyltetrahydrofolate and then the hydrolysis of 5,10-methenyltetrahydrofolate to 10-formyltetrahydrofolate. The protein is Bifunctional protein FolD of Mycolicibacterium gilvum (strain PYR-GCK) (Mycobacterium gilvum (strain PYR-GCK)).